We begin with the raw amino-acid sequence, 293 residues long: Vibriobactin-specific isochorismatase (293 aa).

A Carrier domain is found at 211–287; it reads KLTGLSLRTM…QWWQTIQANL (77 aa). The residue at position 248 (serine 248) is an O-(pantetheine 4'-phosphoryl)serine.

Belongs to the isochorismatase family. Pantetheine 4'-phosphate serves as cofactor.

It carries out the reaction isochorismate + H2O = (2S,3S)-2,3-dihydroxy-2,3-dihydrobenzoate + pyruvate. Its pathway is siderophore biosynthesis; vibriobactin biosynthesis. Functionally, involved in the biosynthesis of the catechol siderophore vibriobactin. Vibriobactin is a chelating compound involved in transporting iron from the bacterial environment into the cell cytoplasm. The sequence is that of Vibriobactin-specific isochorismatase (vibB) from Vibrio cholerae serotype O1 (strain ATCC 39541 / Classical Ogawa 395 / O395).